The chain runs to 81 residues: Sulfur carrier protein TusA (81 aa).

Catalysis depends on Cys-19, which acts as the Cysteine persulfide intermediate.

The protein belongs to the sulfur carrier protein TusA family.

It localises to the cytoplasm. In terms of biological role, sulfur carrier protein which probably makes part of a sulfur-relay system. The sequence is that of Sulfur carrier protein TusA from Vibrio vulnificus (strain CMCP6).